Consider the following 117-residue polypeptide: Cytochrome c6 (117 aa).

The first 24 residues, 1–24, serve as a signal peptide directing secretion; sequence MKKLLAIALTVLATVFAFGTPAFA. Residues cysteine 38, cysteine 41, histidine 42, and methionine 89 each coordinate heme c.

This sequence belongs to the cytochrome c family. PetJ subfamily. In terms of assembly, monomer. Binds 1 heme c group covalently per subunit.

It is found in the cellular thylakoid lumen. Functions as an electron carrier between membrane-bound cytochrome b6-f and photosystem I in oxygenic photosynthesis. The sequence is that of Cytochrome c6 (petJ) from Picosynechococcus sp. (strain ATCC 27264 / PCC 7002 / PR-6) (Agmenellum quadruplicatum).